We begin with the raw amino-acid sequence, 303 residues long: Recombination-associated protein RdgC (303 aa).

Belongs to the RdgC family.

Its subcellular location is the cytoplasm. It is found in the nucleoid. In terms of biological role, may be involved in recombination. The polypeptide is Recombination-associated protein RdgC (Shewanella halifaxensis (strain HAW-EB4)).